A 341-amino-acid polypeptide reads, in one-letter code: Malate dehydrogenase 1, mitochondrial (341 aa).

The N-terminal 22 residues, 1–22, are a transit peptide targeting the mitochondrion; it reads MFRSMLVRSSASAKQAVIRRSF. NAD(+) contacts are provided by residues 36–42 and Asp-62; that span reads GAAGGIG. The substrate site is built by Arg-109 and Arg-115. NAD(+)-binding positions include Asn-122 and 145–147; that span reads ISN. Asn-147 and Arg-181 together coordinate substrate. Residue His-205 is the Proton acceptor of the active site. Met-256 is a binding site for NAD(+).

The protein belongs to the LDH/MDH superfamily. MDH type 1 family. As to quaternary structure, homodimer. Forms intramolecular disulfide bonds. As to expression, expressed in rosette leaves.

It is found in the mitochondrion matrix. It carries out the reaction (S)-malate + NAD(+) = oxaloacetate + NADH + H(+). Negatively regulated by ATP. Not redox-regulated. The formation of intramolecular disulfide bonds does not alter enzymatic activity. Its function is as follows. Catalyzes a reversible NAD-dependent dehydrogenase reaction involved in central metabolism and redox homeostasis between organelle compartments. Required for carbon dioxide and energy partitioning in leaves. May limit photorespiration during the dark phase. Its activity is essential to shuttle reductants out from the mitochondria to support the photorespiratory flux. Can convert 2-oxoglutarate to (S)-2-hydroxyglutarate in vitro. The sequence is that of Malate dehydrogenase 1, mitochondrial from Arabidopsis thaliana (Mouse-ear cress).